We begin with the raw amino-acid sequence, 158 residues long: uncharacterized protein (158 aa).

This is an uncharacterized protein from Mycoplasma pneumoniae (strain ATCC 29342 / M129 / Subtype 1) (Mycoplasmoides pneumoniae).